The sequence spans 304 residues: N-carbamoyl-D-amino acid hydrolase (304 aa).

Residues 5-276 form the CN hydrolase domain; sequence MILAVGQQGP…DEVITAAVDL (272 aa). Active-site residues include E47, K127, and C172.

The enzyme catalyses an N-carbamoyl-D-amino acid + H2O + 2 H(+) = a D-alpha-amino acid + NH4(+) + CO2. In terms of biological role, the enzyme catalyzes the hydrolysis of N-carbamoyl-D-amino acids to the corresponding which are useful intermediates in the preparation of beta-lactam antibiotics. Industrial production of beta-lactam antibiotics is now being developed using this enzyme. The protein is N-carbamoyl-D-amino acid hydrolase of Agrobacterium sp. (strain KNK712).